Consider the following 278-residue polypeptide: HTH-type transcriptional activator RhaS (278 aa).

The region spanning 174–272 is the HTH araC/xylS-type domain; the sequence is NQLMAWLEDH…NWSPRDIRQG (99 aa). 2 consecutive DNA-binding regions (H-T-H motif) follow at residues 191–212 and 239–262; these read EAVA…KQHT and VTEI…RREF.

As to quaternary structure, binds DNA as a dimer.

It localises to the cytoplasm. Activates expression of the rhaBAD and rhaT operons. This Salmonella agona (strain SL483) protein is HTH-type transcriptional activator RhaS.